The following is a 119-amino-acid chain: Large ribosomal subunit protein bL20c (119 aa).

It belongs to the bacterial ribosomal protein bL20 family.

The protein localises to the plastid. It is found in the chloroplast. Binds directly to 23S ribosomal RNA and is necessary for the in vitro assembly process of the 50S ribosomal subunit. It is not involved in the protein synthesizing functions of that subunit. This Nandina domestica (Heavenly bamboo) protein is Large ribosomal subunit protein bL20c.